Reading from the N-terminus, the 156-residue chain is Transcription elongation factor GreA (156 aa).

The stretch at 12-72 forms a coiled coil; sequence YKKLEDELST…KEIEHELKYA (61 aa).

It belongs to the GreA/GreB family.

Its function is as follows. Necessary for efficient RNA polymerase transcription elongation past template-encoded arresting sites. The arresting sites in DNA have the property of trapping a certain fraction of elongating RNA polymerases that pass through, resulting in locked ternary complexes. Cleavage of the nascent transcript by cleavage factors such as GreA or GreB allows the resumption of elongation from the new 3'terminus. GreA releases sequences of 2 to 3 nucleotides. The protein is Transcription elongation factor GreA of Dehalococcoides mccartyi (strain ATCC BAA-2266 / KCTC 15142 / 195) (Dehalococcoides ethenogenes (strain 195)).